The primary structure comprises 495 residues: MHPINAVVAARMLAGISQSNALQSEAIPFGSLEWITYAGISCFLVLFAGIMSGLTLGLMSLGLVELEILQRSGTPKEKKQSAAIFPVVQKQHQLLVTLLLFNALAMEGLPIYLDKIFNEYVAIILSVTFVLFVGEVIPQAICTRYGLAVGANLVWLVRILMVLSYPISFPIAKMLDWVLGHNDPLFRRAQLKALVSIHGEAAGKGGELTHDETTIISGALDLTEKTAQEAMTPIESTFSLDVNSKLDREAMDKIQARGHSRVPVYSDNPKNVIGLLLVKSLLTVRPETGTLVSAVGIRRIPRVPANMPLYDILNEFQKGSSHMAAVVKVKGKSKGHPSTLHEENSGESNVSSNNSELTAPLLLKREGNHDSVIVRIDKANGQSFISEAGRQGFSHTSEEIEDGDVIGIITLEDVFEELLQEEIVDETDEYIDVHKRIRVATVAAVAISSLARAPSGRRLLGPKGSGGPKTPKASSTPKPDDKLMGTMTGPPQGNN.

At 1 to 42 (MHPINAVVAARMLAGISQSNALQSEAIPFGSLEWITYAGISC) the chain is on the extracellular side. The CNNM transmembrane domain maps to 30–212 (GSLEWITYAG…GKGGELTHDE (183 aa)). A helical membrane pass occupies residues 43 to 63 (FLVLFAGIMSGLTLGLMSLGL). Topologically, residues 64–92 (VELEILQRSGTPKEKKQSAAIFPVVQKQH) are cytoplasmic. The chain crosses the membrane as a helical span at residues 93–113 (QLLVTLLLFNALAMEGLPIYL). Residues 114-120 (DKIFNEY) lie on the Extracellular side of the membrane. Residues 121–141 (VAIILSVTFVLFVGEVIPQAI) traverse the membrane as a helical segment. Topologically, residues 142 to 146 (CTRYG) are cytoplasmic. Residues 147–167 (LAVGANLVWLVRILMVLSYPI) form a helical membrane-spanning segment. Residues 168-495 (SFPIAKMLDW…TMTGPPQGNN (328 aa)) are Extracellular-facing. CBS domains lie at 231 to 291 (MTPI…TGTL), 296 to 356 (GIRR…NNSE), and 357 to 426 (LTAP…IVDE). Residues 330–354 (KGKSKGHPSTLHEENSGESNVSSNN) form a disordered region. Asn-349 carries N-linked (GlcNAc...) asparagine glycosylation. Ser-352 carries the phosphoserine modification. N-linked (GlcNAc...) asparagine glycosylation occurs at Asn-353. The tract at residues 455–495 (SGRRLLGPKGSGGPKTPKASSTPKPDDKLMGTMTGPPQGNN) is disordered. Residues 456 to 477 (GRRLLGPKGSGGPKTPKASSTP) show a composition bias toward low complexity.

Its subcellular location is the membrane. This Arabidopsis thaliana (Mouse-ear cress) protein is DUF21 domain-containing protein At4g14230 (CBSDUF2).